The following is a 435-amino-acid chain: Xylose isomerase (435 aa).

Catalysis depends on residues histidine 99 and aspartate 102. Glutamate 230, glutamate 266, histidine 269, aspartate 294, aspartate 305, aspartate 307, and aspartate 337 together coordinate Mg(2+).

It belongs to the xylose isomerase family. Homotetramer. Mg(2+) is required as a cofactor.

The protein resides in the cytoplasm. The catalysed reaction is alpha-D-xylose = alpha-D-xylulofuranose. This is Xylose isomerase from Enterococcus faecalis (strain ATCC 700802 / V583).